Consider the following 1343-residue polypeptide: DNA-directed RNA polymerase subunit beta (1343 aa).

It belongs to the RNA polymerase beta chain family. In terms of assembly, the RNAP catalytic core consists of 2 alpha, 1 beta, 1 beta' and 1 omega subunit. When a sigma factor is associated with the core the holoenzyme is formed, which can initiate transcription.

The enzyme catalyses RNA(n) + a ribonucleoside 5'-triphosphate = RNA(n+1) + diphosphate. Functionally, DNA-dependent RNA polymerase catalyzes the transcription of DNA into RNA using the four ribonucleoside triphosphates as substrates. The sequence is that of DNA-directed RNA polymerase subunit beta from Haemophilus influenzae (strain ATCC 51907 / DSM 11121 / KW20 / Rd).